We begin with the raw amino-acid sequence, 149 residues long: Large ribosomal subunit protein uL22c (149 aa).

The protein belongs to the universal ribosomal protein uL22 family. In terms of assembly, part of the 50S ribosomal subunit.

It localises to the plastid. Its subcellular location is the chloroplast. Its function is as follows. This protein binds specifically to 23S rRNA. Functionally, the globular domain of the protein is located near the polypeptide exit tunnel on the outside of the subunit, while an extended beta-hairpin is found that lines the wall of the exit tunnel in the center of the 70S ribosome. In Hordeum vulgare (Barley), this protein is Large ribosomal subunit protein uL22c (rpl22).